Consider the following 199-residue polypeptide: uncharacterized protein (199 aa).

Residues 17–37 (AGAVTLGIGFFALASALWFLI) traverse the membrane as a helical segment.

The protein resides in the membrane. This is an uncharacterized protein from Homo sapiens (Human).